The sequence spans 335 residues: Holliday junction branch migration complex subunit RuvB (335 aa).

The tract at residues 1–181 is large ATPase domain (RuvB-L); it reads MDRIVEIEKY…FGMQFRLEFY (181 aa). ATP is bound by residues Leu20, Arg21, Gly62, Lys65, Thr66, Thr67, 128 to 130, Arg171, Tyr181, and Arg218; that span reads EDY. A Mg(2+)-binding site is contributed by Thr66. A small ATPAse domain (RuvB-S) region spans residues 182–252; sequence KDSELALILQ…RANEALNSLG (71 aa). Residues 255–335 are head domain (RuvB-H); sequence ELGFDAMDLR…LNYEKTLFEE (81 aa). Residues Arg309 and Arg314 each coordinate DNA.

This sequence belongs to the RuvB family. As to quaternary structure, homohexamer. Forms an RuvA(8)-RuvB(12)-Holliday junction (HJ) complex. HJ DNA is sandwiched between 2 RuvA tetramers; dsDNA enters through RuvA and exits via RuvB. An RuvB hexamer assembles on each DNA strand where it exits the tetramer. Each RuvB hexamer is contacted by two RuvA subunits (via domain III) on 2 adjacent RuvB subunits; this complex drives branch migration. In the full resolvosome a probable DNA-RuvA(4)-RuvB(12)-RuvC(2) complex forms which resolves the HJ.

The protein resides in the cytoplasm. It carries out the reaction ATP + H2O = ADP + phosphate + H(+). In terms of biological role, the RuvA-RuvB-RuvC complex processes Holliday junction (HJ) DNA during genetic recombination and DNA repair, while the RuvA-RuvB complex plays an important role in the rescue of blocked DNA replication forks via replication fork reversal (RFR). RuvA specifically binds to HJ cruciform DNA, conferring on it an open structure. The RuvB hexamer acts as an ATP-dependent pump, pulling dsDNA into and through the RuvAB complex. RuvB forms 2 homohexamers on either side of HJ DNA bound by 1 or 2 RuvA tetramers; 4 subunits per hexamer contact DNA at a time. Coordinated motions by a converter formed by DNA-disengaged RuvB subunits stimulates ATP hydrolysis and nucleotide exchange. Immobilization of the converter enables RuvB to convert the ATP-contained energy into a lever motion, pulling 2 nucleotides of DNA out of the RuvA tetramer per ATP hydrolyzed, thus driving DNA branch migration. The RuvB motors rotate together with the DNA substrate, which together with the progressing nucleotide cycle form the mechanistic basis for DNA recombination by continuous HJ branch migration. Branch migration allows RuvC to scan DNA until it finds its consensus sequence, where it cleaves and resolves cruciform DNA. This Campylobacter jejuni (strain RM1221) protein is Holliday junction branch migration complex subunit RuvB.